The chain runs to 54 residues: Phorbol-12-myristate-13-acetate-induced protein 1 (54 aa).

A BH3 motif is present at residues 29–37 (LRRFGDKLN). The required for mitochondrial location stretch occupies residues 41–50 (KLLNLISKLF).

This sequence belongs to the PMAIP1 family. Interacts with MCL1. Interacts with BCL2A1. Interacts with BAX. Interacts with BCL2L10. In terms of tissue distribution, highly expressed in adult T-cell leukemia cell line.

Its subcellular location is the mitochondrion. Functionally, promotes activation of caspases and apoptosis. Promotes mitochondrial membrane changes and efflux of apoptogenic proteins from the mitochondria. Contributes to p53/TP53-dependent apoptosis after radiation exposure. Promotes proteasomal degradation of MCL1. Competes with BAK1 for binding to MCL1 and can displace BAK1 from its binding site on MCL1. Competes with BIM/BCL2L11 for binding to MCL1 and can displace BIM/BCL2L11 from its binding site on MCL1. The protein is Phorbol-12-myristate-13-acetate-induced protein 1 (PMAIP1) of Homo sapiens (Human).